Here is a 155-residue protein sequence, read N- to C-terminus: Small ribosomal subunit protein uS7cz/uS7cy (155 aa).

It belongs to the universal ribosomal protein uS7 family. Part of the 30S ribosomal subunit.

The protein resides in the plastid. Its subcellular location is the chloroplast. In terms of biological role, one of the primary rRNA binding proteins, it binds directly to 16S rRNA where it nucleates assembly of the head domain of the 30S subunit. This chain is Small ribosomal subunit protein uS7cz/uS7cy (rps7-A), found in Piper cenocladum (Ant piper).